The primary structure comprises 417 residues: CinA-like protein (417 aa).

This sequence belongs to the CinA family.

The sequence is that of CinA-like protein from Gloeothece citriformis (strain PCC 7424) (Cyanothece sp. (strain PCC 7424)).